A 124-amino-acid polypeptide reads, in one-letter code: MTRIKNNGISKKKRKRKISKMKGWVGGHSKLFRTGNQQLMKARHYAFYDRKKKKNLNKTLWITRINGGLKYYLTINEKYNIFVSFLRKTKTYVNKKLLSEINVRDSKSFSHLSKPIMKSTGINL.

The protein belongs to the bacterial ribosomal protein bL20 family.

It is found in the plastid. The protein resides in the chloroplast. Binds directly to 23S ribosomal RNA and is necessary for the in vitro assembly process of the 50S ribosomal subunit. It is not involved in the protein synthesizing functions of that subunit. This chain is Large ribosomal subunit protein bL20c (rpl20), found in Euglena gracilis.